Here is a 484-residue protein sequence, read N- to C-terminus: Probable receptor-like protein kinase At5g18500 (484 aa).

The chain crosses the membrane as a helical span at residues 21–41; it reads IIVIVLSAIFVVVLAISLWLT. The segment at 72 to 135 is disordered; it reads RVDEVSSSNG…SVSSANPLTA (64 aa). Basic and acidic residues predominate over residues 91–105; that stretch reads KFGDKEPEKGIKAES. Residues 125-134 show a composition bias toward polar residues; sequence SSVSSANPLT. The residue at position 155 (T155) is a Phosphothreonine. Residues 166–445 form the Protein kinase domain; sequence FSRDNIIGDG…MLESEEYPIA (280 aa). ATP-binding positions include 172 to 180 and K194; that span reads IGDGGYGVV. Y239 is subject to Phosphotyrosine. D292 acts as the Proton acceptor in catalysis. Phosphoserine is present on S296. Phosphothreonine occurs at positions 326 and 331. Y339 carries the post-translational modification Phosphotyrosine. Residues 425–484 form a disordered region; it reads EKRPRMSQVARMLESEEYPIAREDRRRRRSQNGTTRDSDPPRNSTDTDKSEYHDLKPEGG. The span at 460 to 484 shows a compositional bias: basic and acidic residues; that stretch reads RDSDPPRNSTDTDKSEYHDLKPEGG.

This sequence belongs to the protein kinase superfamily. Ser/Thr protein kinase family.

The protein resides in the cell membrane. The enzyme catalyses L-seryl-[protein] + ATP = O-phospho-L-seryl-[protein] + ADP + H(+). It carries out the reaction L-threonyl-[protein] + ATP = O-phospho-L-threonyl-[protein] + ADP + H(+). The polypeptide is Probable receptor-like protein kinase At5g18500 (Arabidopsis thaliana (Mouse-ear cress)).